Here is a 90-residue protein sequence, read N- to C-terminus: Small ribosomal subunit protein uS19 (90 aa).

It belongs to the universal ribosomal protein uS19 family.

Its function is as follows. Protein S19 forms a complex with S13 that binds strongly to the 16S ribosomal RNA. This is Small ribosomal subunit protein uS19 from Thioalkalivibrio sulfidiphilus (strain HL-EbGR7).